The sequence spans 71 residues: NAD(P)H-quinone oxidoreductase subunit O (71 aa).

The protein belongs to the complex I NdhO subunit family. In terms of assembly, NDH-1 can be composed of about 15 different subunits; different subcomplexes with different compositions have been identified which probably have different functions.

It localises to the cellular thylakoid membrane. It carries out the reaction a plastoquinone + NADH + (n+1) H(+)(in) = a plastoquinol + NAD(+) + n H(+)(out). It catalyses the reaction a plastoquinone + NADPH + (n+1) H(+)(in) = a plastoquinol + NADP(+) + n H(+)(out). NDH-1 shuttles electrons from an unknown electron donor, via FMN and iron-sulfur (Fe-S) centers, to quinones in the respiratory and/or the photosynthetic chain. The immediate electron acceptor for the enzyme in this species is believed to be plastoquinone. Couples the redox reaction to proton translocation, and thus conserves the redox energy in a proton gradient. Cyanobacterial NDH-1 also plays a role in inorganic carbon-concentration. The chain is NAD(P)H-quinone oxidoreductase subunit O from Picosynechococcus sp. (strain ATCC 27264 / PCC 7002 / PR-6) (Agmenellum quadruplicatum).